Reading from the N-terminus, the 122-residue chain is ATP synthase epsilon chain (122 aa).

Residues 97-112 are compositionally biased toward basic and acidic residues; sequence EDLKSERELTRSRGDA. The segment at 97–122 is disordered; that stretch reads EDLKSERELTRSRGDAALRATRRLNS.

The protein belongs to the ATPase epsilon chain family. F-type ATPases have 2 components, CF(1) - the catalytic core - and CF(0) - the membrane proton channel. CF(1) has five subunits: alpha(3), beta(3), gamma(1), delta(1), epsilon(1). CF(0) has three main subunits: a, b and c.

The protein resides in the cell membrane. Produces ATP from ADP in the presence of a proton gradient across the membrane. The protein is ATP synthase epsilon chain of Corynebacterium aurimucosum (strain ATCC 700975 / DSM 44827 / CIP 107346 / CN-1) (Corynebacterium nigricans).